A 455-amino-acid chain; its full sequence is Cerebellar degeneration-related protein 2 (455 aa).

2 coiled-coil regions span residues 37-141 and 191-264; these read LLDR…SSQG and EEEN…QAEH. Residues 132 to 142 are compositionally biased toward polar residues; the sequence is VEELKSSSQGR. The tract at residues 132–152 is disordered; sequence VEELKSSSQGRGRQKACDQEK. A Phosphoserine modification is found at serine 310. Residues 395–419 are disordered; sequence SEAGASGWEPTPVSPESISSPTTTP. Positions 403-419 are enriched in low complexity; it reads EPTPVSPESISSPTTTP.

It belongs to the CDR2 family. As to expression, expressed in brain and testis (at protein level). Expressed in the cerebellum, cerebral cortex, heart, lung, spleen, ovary, kidney and testis.

This is Cerebellar degeneration-related protein 2 (Cdr2) from Mus musculus (Mouse).